Here is a 620-residue protein sequence, read N- to C-terminus: Zinc metalloproteinase-disintegrin-like ACLD (620 aa).

A signal peptide spans 1-20 (MIQVLLVTLCLAVFPYQGSS). Residues 21–189 (IILESGNVND…KKASQLNLTP (169 aa)) constitute a propeptide that is removed on maturation. A Peptidase M12B domain is found at 199 to 395 (KYVEFVVVLD…RRPKCILNEP (197 aa)). Glu202 provides a ligand contact to Ca(2+). Residues Asn259 and Asn265 are each glycosylated (N-linked (GlcNAc...) asparagine). Asp286 contacts Ca(2+). Intrachain disulfides connect Cys310–Cys390, Cys350–Cys374, and Cys352–Cys357. His335 contacts Zn(2+). The active site involves Glu336. Zn(2+) contacts are provided by His339 and His345. A glycan (N-linked (GlcNAc...) asparagine) is linked at Asn373. 2 residues coordinate Ca(2+): Cys390 and Asn393. An N-linked (GlcNAc...) asparagine glycan is attached at Asn396. A Disintegrin domain is found at 403–489 (PPVCGNELLE…ECPTDRFQRN (87 aa)). Ca(2+) contacts are provided by Val405, Asn408, Leu410, Glu412, Glu415, and Asp418. Disulfide bonds link Cys406-Cys435, Cys417-Cys430, Cys419-Cys425, Cys429-Cys452, Cys443-Cys449, Cys448-Cys474, Cys461-Cys481, Cys468-Cys500, Cys493-Cys505, Cys512-Cys562, Cys527-Cys573, Cys540-Cys550, Cys557-Cys599, and Cys593-Cys604. Positions 467 to 469 (DCD) match the D/ECD-tripeptide motif. Residues Asn502 and Asn536 are each glycosylated (N-linked (GlcNAc...) asparagine).

Belongs to the venom metalloproteinase (M12B) family. P-III subfamily. P-IIIa sub-subfamily. Monomer. Zn(2+) serves as cofactor. Expressed by the venom gland.

Its subcellular location is the secreted. With respect to regulation, inhibited by EDTA and O-phenanthroline. Not inhibited by PMSF, benzamidine, irreversible serine-proteinase inhibitors and cysteine proteinase inhibitor E-64. Is a potent activator of prothrombin (F2). Does not elicit any hemorrhagic response. Barely inhibits collagen-induced platelet aggregation. Binds neither collagen, nor the jararhagin-monoclonal antibody MAJar3. Hydrolyzes the Aalpha-chain of fibrin and fibrinogen, without affecting the Bbeta- and gamma-chains. Is capable of triggering endothelial pro-inflammatory and procoagulant cell responses, but fails to trigger apoptosis. Induces von Willebrand factor release, and the expression of both ICAM1 and E-selectin (SELE) (without increase in VCAM1) in endothelial cells (HUVEC). Is also able to up-regulate the synthesis of the coagulation factor TF (F3). Enhances nitric oxide (NO) generation, prostacyclin production and interleukin-8 release. The sequence is that of Zinc metalloproteinase-disintegrin-like ACLD from Agkistrodon contortrix laticinctus (Broad-banded copperhead).